The sequence spans 261 residues: Indole-3-glycerol phosphate synthase (261 aa).

Belongs to the TrpC family.

It catalyses the reaction 1-(2-carboxyphenylamino)-1-deoxy-D-ribulose 5-phosphate + H(+) = (1S,2R)-1-C-(indol-3-yl)glycerol 3-phosphate + CO2 + H2O. Its pathway is amino-acid biosynthesis; L-tryptophan biosynthesis; L-tryptophan from chorismate: step 4/5. This is Indole-3-glycerol phosphate synthase from Oceanobacillus iheyensis (strain DSM 14371 / CIP 107618 / JCM 11309 / KCTC 3954 / HTE831).